Consider the following 294-residue polypeptide: Tissue factor (294 aa).

The N-terminal stretch at 1 to 28 is a signal peptide; it reads MAILVRPRLLAALAPTFLGCLLLQVIAG. The Extracellular segment spans residues 29 to 251; the sequence is AGIPEKAFNL…TEQWKSFLGE (223 aa). N-linked (GlcNAc...) asparagine glycans are attached at residues N37 and N57. C75 and C83 are oxidised to a cystine. N-linked (GlcNAc...) asparagine glycosylation is found at N169 and N200. Cysteines 218 and 241 form a disulfide. The WKS motif signature appears at 245–247; it reads WKS. Residues 252–274 form a helical membrane-spanning segment; sequence TLIIVGAVVLLATIFIILLSISL. Residue C275 is the site of S-palmitoyl cysteine attachment. Over 275–294 the chain is Cytoplasmic; it reads CKRRKNRAGQKGKNTPSRLA.

The protein belongs to the tissue factor family. As to quaternary structure, interacts with HSPE; the interaction, inhibited by heparin, promotes the generation of activated factor X and activates coagulation in the presence of activated factor VII.

The protein localises to the membrane. Functionally, initiates blood coagulation by forming a complex with circulating factor VII or VIIa. The [TF:VIIa] complex activates factors IX or X by specific limited proteolysis. TF plays a role in normal hemostasis by initiating the cell-surface assembly and propagation of the coagulation protease cascade. In Mus musculus (Mouse), this protein is Tissue factor (F3).